Consider the following 161-residue polypeptide: Methylated-DNA--protein-cysteine methyltransferase (161 aa).

The active-site Nucleophile; methyl group acceptor is the C128.

The protein belongs to the MGMT family.

It localises to the cytoplasm. The catalysed reaction is a 6-O-methyl-2'-deoxyguanosine in DNA + L-cysteinyl-[protein] = S-methyl-L-cysteinyl-[protein] + a 2'-deoxyguanosine in DNA. It catalyses the reaction a 4-O-methyl-thymidine in DNA + L-cysteinyl-[protein] = a thymidine in DNA + S-methyl-L-cysteinyl-[protein]. Its function is as follows. Involved in the cellular defense against the biological effects of O6-methylguanine (O6-MeG) and O4-methylthymine (O4-MeT) in DNA. Repairs the methylated nucleobase in DNA by stoichiometrically transferring the methyl group to a cysteine residue in the enzyme. This is a suicide reaction: the enzyme is irreversibly inactivated. In Methanocaldococcus vulcanius (strain ATCC 700851 / DSM 12094 / M7) (Methanococcus vulcanius), this protein is Methylated-DNA--protein-cysteine methyltransferase.